The sequence spans 1059 residues: Ubiquitin carboxyl-terminal hydrolase 36 (1059 aa).

2 disordered regions span residues 24-49 (VGNG…DSEM) and 94-148 (SNNN…KPKR). Over residues 94–123 (SNNNNSSSCNGSNFGNSKVVGANGHDNGNN) the composition is skewed to low complexity. A compositionally biased stretch (polar residues) spans 130-139 (QSESTQSGPS). The USP domain maps to 171–479 (TGMINVGNTC…NAYIMFYELD (309 aa)). Cys180 serves as the catalytic Nucleophile. Catalysis depends on His438, which acts as the Proton acceptor. The interval 505–673 (TVSSSSPTHT…KTPLKSSVKT (169 aa)) is disordered. Phosphoserine is present on residues Ser508 and Ser510. Residues 528–539 (GYSNGHATGSSN) show a composition bias toward polar residues. Composition is skewed to low complexity over residues 540-560 (AQKT…NGLQ), 592-611 (NGNK…KSVN), and 633-647 (ATAT…RPTA). The span at 655-664 (MTEDSSDKPK) shows a compositional bias: basic and acidic residues. 2 positions are modified to phosphothreonine: Thr673 and Thr682. 3 disordered regions span residues 687-893 (LVPY…EAST), 926-998 (KELV…RYHN), and 1012-1059 (KYNR…QSSS). Phosphoserine occurs at positions 692 and 694. Low complexity-rich tracts occupy residues 729–739 (TKTNGGSLTNG) and 752–765 (SSSS…ASAA). Ser766 carries the post-translational modification Phosphoserine. The segment covering 766–776 (SDDEDADEEEE) has biased composition (acidic residues). Residues 779–795 (KLTNGWQPQKQSQSLTQ) are compositionally biased toward polar residues. The segment covering 799 to 808 (PPSPKTPPSP) has biased composition (pro residues). Ser801 is subject to Phosphoserine. Thr804 is modified (phosphothreonine). Ser807 carries the phosphoserine modification. Over residues 825-839 (DNEDEDDDDDEDEEE) the composition is skewed to acidic residues. 2 stretches are compositionally biased toward polar residues: residues 842–862 (QVVS…STTP) and 876–893 (KSQQ…EAST). A phosphothreonine mark is found at Thr846 and Thr861. The span at 926 to 940 (KELVAEAREQRQHDH) shows a compositional bias: basic and acidic residues. Positions 1048–1059 (QQQQQQSQQSSS) are enriched in low complexity.

It belongs to the peptidase C19 family. As to quaternary structure, interacts with atms/PAF1, but not with CycT.

It localises to the nucleus. Its subcellular location is the nucleolus. It catalyses the reaction Thiol-dependent hydrolysis of ester, thioester, amide, peptide and isopeptide bonds formed by the C-terminal Gly of ubiquitin (a 76-residue protein attached to proteins as an intracellular targeting signal).. In terms of biological role, required for maintaining multiple types of adult stem cells, including male and female germline, epithelial follicle cell and intestinal stem cells. May function as a transcriptional repressor by continually deubiquiting histone H2B at the promoters of genes critical for cellular differentiation, thereby preventing histone H3 'Lys-4' trimethylation (H3K4). Controls selective autophagy activation by ubiquitinated proteins. This chain is Ubiquitin carboxyl-terminal hydrolase 36 (Usp36), found in Drosophila pseudoobscura pseudoobscura (Fruit fly).